The following is a 459-amino-acid chain: uncharacterized protein (459 aa).

A TRAM domain is found at 2 to 60 (NLRVKQKIPLKIKRMGINGEGIGFYKRTLVFVPGALKGEEIFCQITSVKHNFVQARLLT). Positions 73, 79, 82, and 162 each coordinate [4Fe-4S] cluster. The S-adenosyl-L-methionine site is built by Gln284, Tyr313, Asp334, and Asp382. Cys409 acts as the Nucleophile in catalysis.

It belongs to the class I-like SAM-binding methyltransferase superfamily. RNA M5U methyltransferase family.

This is an uncharacterized protein from Streptococcus mutans serotype c (strain ATCC 700610 / UA159).